A 412-amino-acid polypeptide reads, in one-letter code: 3,4-dihydroxybenzoate--[aryl-carrier protein] ligase (412 aa).

It belongs to the ATP-dependent AMP-binding enzyme family.

The enzyme catalyses holo-[aryl-carrier protein] + 3,4-dihydroxybenzoate + ATP = 3,4-dihydroxybenzoyl-[aryl-carrier protein] + AMP + diphosphate. It catalyses the reaction 3,4-dihydroxybenzoate + ATP + H(+) = 3,4-dihydroxybenzoyl-5'-AMP + diphosphate. It carries out the reaction 3,4-dihydroxybenzoyl-5'-AMP + holo-[aryl-carrier protein] = 3,4-dihydroxybenzoyl-[aryl-carrier protein] + AMP + H(+). The protein operates within siderophore biosynthesis; petrobactin biosynthesis. Its activity is regulated as follows. ATP-pyrophosphate exchange is inhibited in vitro by nonhydrolyzable acylsulfamate analogs that mimic the AsbC-bound intermediate 3,4-dihydroxybenzoyl-AMP. In terms of biological role, involved in the biosynthesis of petrobactin, a catecholate siderophore that functions in both iron acquisition and virulence. Catalyzes the adenylation of 3,4-dihydroxybenzoate (3,4-DHBA) to the corresponding AMP ester, followed by the transfer of the activated unit to the phosphopantetheine thiol of the aryl-carrier protein AsbD. The polypeptide is 3,4-dihydroxybenzoate--[aryl-carrier protein] ligase (Bacillus anthracis).